Consider the following 1629-residue polypeptide: MALQSPGATGASSSVSRLLSSAKLSSTKTIFSVDFVRSYCISKGTKRRNELSGFRGYSPLLKSSLRSPFSVKAILNSDRAAGDASSSFSDLKPQVAYLEDIISERGACGVGFIANLENKATHKIVNDALIALGCMEHRGGCGSDNTSGDGSGLMTSIPWDLFNEWAEKQGIASFDRTHTGVGMLFLPRDDNIRKEAKKVITSIFEKEGLEVLGWRDVPVEASIVGHNAKQTMPNTEQVFVRIVKDDKVDDVERELYICRKLIERAVASESWASELYFSSLSNQTIVYKGMLRSEVLGLFYPDLQNDLYKSPFAIYHRRFSTNTSPRWHLAQPMRFLGHNGEINTIQGNLNWMTSREASLRSPVWHGRENDIRPISNPKASDSANLDSAAELLIRSGRTPEESLMILVPEAYKNHPTLMIKYPEAVDFYDYYKGQMEPWDGPALVLFSDGKTVGACLDRNGLRPARYWRTSDNVVYVASEVGVLPMDESKVTMKGRLGPGMMISVDLENGQVYENTEVKKRVASYNPYGKWVSENLRNLKPSNYLSSAILETDETLRRQQAFGYSSEDVQMVIESMAAQGKEPTFCMGDDTPVAVLSQKPHMLYDYFKQRFAQVTNPAIDPLREGLVMSLEVNIGKRGNILEVGPQNVSQVVLSGPVLNERELEGLLGDPLLKSQILPTFFDIRRGIEGSLKKGLLKLCEAADEAVRNGSQVLVLSDRSDNPEPTRPAIPMLLAVGAVHQHLIQNGLRMSASIIADTAQCFSTHHFACLIGYGASAICPHLALETCRQWRLSNKTVNMMRNGKMPTVTMEQAQKNYRKAVNTGLLKVLSKMGISLFSSYCGAQIFEIYGLGNEVVEFSFRGSASQIGGLTLDELARETLTFWVRAFSEDTAKRLENFGFIQFRPGGEYHGNNPEMSKLLHKAVREKSETAYAVYQQHLANRPITVFRDLLEFKSDRNPIPVGKVEPASSIVERFCTGGMSLGAISRETHETIAIAMNRLGGKSNSGEGGEDPIRWKPLTDVVDGYSSTLPHLKGLRNGDTATSAIKQVASGRFGVTPTFLVNADQLEIKVAQGAKPGEGGQLPGKKVSAYIARLRNSKPGVPLISPPPHHDIYSIEDLAQLIFDLHQVNPKAKVSVKLVSETGIGTVASGVAKANADIIQISGYDGGTGASPISSIKHAGGPWELGLAETQKTLIGNGLRERVIIRVDGGFKSGVDVLIAAAMGADEYGFGTLAMIATGCIMARICHTNNCPVGVASQREELRARFPGLPGDLVNFFLYIAEEVRGILAQLGYEKLDDIIGRTDLLKARDISLVKTHLDLSYLLSSVGLPKRSSTSIRKQEVHSNGPVLDDTLLQDPEIMDAIENEKTVHKTMSIYNVDRSVCGRIAGVIAKKYGDTGFAGQLNLTFTGSAGQSFACFLTPGMNIRLVGEANDYVGKGMAGGEVVILPVESTGFRPEDATIVGNTCLYGATGGLLFVRGKAGERFAVRNSLAQAVVEGTGDHCCEYMTGGCVVILGKVGRNVAAGMTGGLAYILDEDNTLLPKMNKEIVKIQRVTSPVGQTQLKSLIQAHVEKTGSSKGAMIVEEWDKYLAMFWQLVPPSEEDTPEANSDHILKTTTGDEEQVSSTLAEK.

The N-terminal 107 residues, 1-107 (MALQSPGATG…LEDIISERGA (107 aa)), are a transit peptide targeting the chloroplast. C108 acts as the For GATase activity in catalysis. Residues 108 to 507 (CGVGFIANLE…PGMMISVDLE (400 aa)) form the Glutamine amidotransferase type-2 domain. 1186–1243 (LAETQKTLIGNGLRERVIIRVDGGFKSGVDVLIAAAMGADEYGFGTLAMIATGCIMAR) is a binding site for FMN. [3Fe-4S] cluster contacts are provided by C1239, C1245, and C1250. The segment at 1599–1629 (SEEDTPEANSDHILKTTTGDEEQVSSTLAEK) is disordered.

Belongs to the glutamate synthase family. The cofactor is [3Fe-4S] cluster. It depends on FAD as a cofactor. FMN serves as cofactor. Expressed predominantly in roots and slightly in leaves. Low expression in the leaf mesophyll and phloem companion cell-sieve element complex.

The protein resides in the plastid. The protein localises to the chloroplast stroma. The catalysed reaction is 2 oxidized [2Fe-2S]-[ferredoxin] + 2 L-glutamate = L-glutamine + 2 reduced [2Fe-2S]-[ferredoxin] + 2-oxoglutarate + 2 H(+). The protein operates within amino-acid biosynthesis; L-glutamate biosynthesis via GLT pathway; L-glutamate from 2-oxoglutarate and L-glutamine (ferredoxin route): step 1/1. Its pathway is energy metabolism; nitrogen metabolism. In terms of biological role, may play a role in primary nitrogen assimilation in roots. Could supply a constitutive level of glutamate to maintain a basal level of protein synthesis. This Arabidopsis thaliana (Mouse-ear cress) protein is Ferredoxin-dependent glutamate synthase 2, chloroplastic (GLU2).